A 733-amino-acid polypeptide reads, in one-letter code: Phosphoribosylformylglycinamidine synthase subunit PurL (733 aa).

His32 is an active-site residue. Tyr35 contacts ATP. Glu81 is a Mg(2+) binding site. Substrate-binding positions include 82-85 and Arg104; that span reads SHNH. The active-site Proton acceptor is His83. Asp105 contributes to the Mg(2+) binding site. Residue Gln230 participates in substrate binding. Position 258 (Asp258) interacts with Mg(2+). 301-303 contacts substrate; the sequence is ESQ. ATP is bound by residues Asp482 and Gly519. Asn520 serves as a coordination point for Mg(2+). Residue Ser522 participates in substrate binding.

The protein belongs to the FGAMS family. Monomer. Part of the FGAM synthase complex composed of 1 PurL, 1 PurQ and 2 PurS subunits.

Its subcellular location is the cytoplasm. The catalysed reaction is N(2)-formyl-N(1)-(5-phospho-beta-D-ribosyl)glycinamide + L-glutamine + ATP + H2O = 2-formamido-N(1)-(5-O-phospho-beta-D-ribosyl)acetamidine + L-glutamate + ADP + phosphate + H(+). It participates in purine metabolism; IMP biosynthesis via de novo pathway; 5-amino-1-(5-phospho-D-ribosyl)imidazole from N(2)-formyl-N(1)-(5-phospho-D-ribosyl)glycinamide: step 1/2. Functionally, part of the phosphoribosylformylglycinamidine synthase complex involved in the purines biosynthetic pathway. Catalyzes the ATP-dependent conversion of formylglycinamide ribonucleotide (FGAR) and glutamine to yield formylglycinamidine ribonucleotide (FGAM) and glutamate. The FGAM synthase complex is composed of three subunits. PurQ produces an ammonia molecule by converting glutamine to glutamate. PurL transfers the ammonia molecule to FGAR to form FGAM in an ATP-dependent manner. PurS interacts with PurQ and PurL and is thought to assist in the transfer of the ammonia molecule from PurQ to PurL. The protein is Phosphoribosylformylglycinamidine synthase subunit PurL of Methanocaldococcus jannaschii (strain ATCC 43067 / DSM 2661 / JAL-1 / JCM 10045 / NBRC 100440) (Methanococcus jannaschii).